Consider the following 320-residue polypeptide: Ferrochelatase (320 aa).

2 residues coordinate Fe cation: histidine 194 and glutamate 275.

It belongs to the ferrochelatase family.

Its subcellular location is the cytoplasm. It carries out the reaction heme b + 2 H(+) = protoporphyrin IX + Fe(2+). It participates in porphyrin-containing compound metabolism; protoheme biosynthesis; protoheme from protoporphyrin-IX: step 1/1. Functionally, catalyzes the ferrous insertion into protoporphyrin IX. This is Ferrochelatase from Serratia proteamaculans (strain 568).